Here is a 373-residue protein sequence, read N- to C-terminus: Type 2 DNA topoisomerase 6 subunit A (373 aa).

The Topo IIA-type catalytic domain occupies 15–153 (QGDTLAKERL…FHMRPEEDGA (139 aa)). Tyr-110 functions as the O-(5'-phospho-DNA)-tyrosine intermediate in the catalytic mechanism. Residues Glu-206 and Asp-258 each contribute to the Mg(2+) site.

It belongs to the TOP6A family. In terms of assembly, homodimer. Heterotetramer of two Top6A and two Top6B chains. The cofactor is Mg(2+).

It carries out the reaction ATP-dependent breakage, passage and rejoining of double-stranded DNA.. In terms of biological role, relaxes both positive and negative superturns and exhibits a strong decatenase activity. The chain is Type 2 DNA topoisomerase 6 subunit A from Methanosarcina acetivorans (strain ATCC 35395 / DSM 2834 / JCM 12185 / C2A).